The chain runs to 316 residues: Lys-63-specific deubiquitinase BRCC36 (316 aa).

Ala-2 is modified (N-acetylalanine). The MPN domain maps to 12 to 179 (VHLESDAFLV…YTCFQSIQAQ (168 aa)). Residues His-122, His-124, and Asp-135 each coordinate Zn(2+). The short motif at 122–135 (HSHPHITVWPSHVD) is the JAMM motif element. Phosphoserine is present on Ser-258.

Belongs to the peptidase M67A family. BRCC36 subfamily. As to quaternary structure, component of the ARISC complex, at least composed of UIMC1/RAP80, ABRAXAS1, BRCC3/BRCC36, BABAM2 and BABAM1/NBA1. Component of the BRCA1-A complex, at least composed of BRCA1, BARD1, UIMC1/RAP80, ABRAXAS1, BRCC3/BRCC36, BABAM2 and BABAM1/NBA1. In the BRCA1-A complex, interacts directly with ABRAXAS1 and BABAM2. Component of the BRISC complex, at least composed of ABRAXAS2, BRCC3/BRCC36, BABAM2 and BABAM1/NBA1. Identified in a complex with SHMT2 and the other subunits of the BRISC complex. In the BRISC complex, interacts directly with ABRAXAS2. Identified in a complex with ABRAXAS2 and NUMA1. The BRISC complex interacts with the CSN complex. Component of the BRCA1/BRCA2 containing complex (BRCC), which also contains BRCA1, BRCA2, BARD1, BABAM2 and RAD51. BRCC is a ubiquitin E3 ligase complex that enhances cellular survival following DNA damage. Interacts with BRCA1. Binds polyubiquitin. Interacts with PWWP2B. Interacts with HDAC1; this interaction is enhanced in the presence of PWWP2B. Zn(2+) is required as a cofactor.

The protein localises to the nucleus. The protein resides in the cytoplasm. It is found in the cytoskeleton. Its subcellular location is the spindle pole. Metalloprotease that specifically cleaves 'Lys-63'-linked polyubiquitin chains. Does not have activity toward 'Lys-48'-linked polyubiquitin chains. Component of the BRCA1-A complex, a complex that specifically recognizes 'Lys-63'-linked ubiquitinated histones H2A and H2AX at DNA lesions sites, leading to target the BRCA1-BARD1 heterodimer to sites of DNA damage at double-strand breaks (DSBs). In the BRCA1-A complex, it specifically removes 'Lys-63'-linked ubiquitin on histones H2A and H2AX, antagonizing the RNF8-dependent ubiquitination at double-strand breaks (DSBs). Catalytic subunit of the BRISC complex, a multiprotein complex that specifically cleaves 'Lys-63'-linked ubiquitin in various substrates. Mediates the specific 'Lys-63'-specific deubiquitination associated with the COP9 signalosome complex (CSN), via the interaction of the BRISC complex with the CSN complex. The BRISC complex is required for normal mitotic spindle assembly and microtubule attachment to kinetochores via its role in deubiquitinating NUMA1. Plays a role in interferon signaling via its role in the deubiquitination of the interferon receptor IFNAR1; deubiquitination increases IFNAR1 activity by enhancing its stability and cell surface expression. Acts as a regulator of the NLRP3 inflammasome by mediating deubiquitination of NLRP3, leading to NLRP3 inflammasome assembly. Down-regulates the response to bacterial lipopolysaccharide (LPS) via its role in IFNAR1 deubiquitination. Deubiquitinates HDAC1 and PWWP2B leading to their stabilization. This chain is Lys-63-specific deubiquitinase BRCC36 (BRCC3), found in Callithrix jacchus (White-tufted-ear marmoset).